We begin with the raw amino-acid sequence, 996 residues long: Leucine-rich repeat receptor-like kinase protein THICK TASSEL DWARF1 (996 aa).

The signal sequence occupies residues 1–26 (MPPPTFLLGLLLLLLLAAAAPAPASA). LRR repeat units follow at residues 78–103 (TSRV…VALL), 104–127 (DALA…LASM), 128–151 (PALR…PPAA), 153–178 (FPAL…APHA), 180–201 (SLRY…TFGD), 202–226 (LAAL…LSRL), 251–275 (LQSL…LARL), 276–299 (SRLD…LGAL), 300–323 (TSLR…FAAL), 325–349 (NLKL…DFPF), 351–371 (EVLQ…LGRN), 372–395 (GRLK…LCAG), 397–419 (NLQL…LGDC), 420–443 (KTLT…LFDL), 445–466 (QANM…VIAG), 467–490 (DKIG…IGNL), 491–514 (PALQ…IGRL), 516–538 (NLTR…LMGC), 539–562 (ASLG…VTSL), 563–586 (KILC…MANM), and 587–611 (TSLT…QFLV). The chain crosses the membrane as a helical span at residues 646–666 (KKLLVWLVVLLTLLVLAVLGA). A Protein kinase domain is found at 703-978 (LKEDNIIGKG…TMREVVHMLS (276 aa)). ATP-binding positions include 709–717 (IGKGGAGIV) and K731. D828 acts as the Proton acceptor in catalysis.

The protein belongs to the protein kinase superfamily. Ser/Thr protein kinase family. In terms of tissue distribution, highly expressed in the apex of the vegetative seedlings. Lower expression in young leaves, ears and tassels, embryos and roots. Not expressed in the shoot meristem itself. Detected in the three outermost layers of the inflorescence meristem, and on its flanks at positions of prospective spikelet pair meristems. Not confined to meristematic cells but also detected in primordia of glumes, lemmas and stamens.

It localises to the membrane. It carries out the reaction L-seryl-[protein] + ATP = O-phospho-L-seryl-[protein] + ADP + H(+). The catalysed reaction is L-threonyl-[protein] + ATP = O-phospho-L-threonyl-[protein] + ADP + H(+). Functionally, receptor-like kinase protein that regulates meristem size during inflorescence and flower development. Promotes vegetative meristem growth and restricts inflorescence and floral meristem growth. Based on additive and synergistic phenotypes of double mutants, it is probable that unlike CLV1 and CLV2 in A.thaliana, TD1 and FAE2 do not function exclusively in a single pathway. However, KN-1 and TD1 do function in a linear pathway to maintain vegetative meristem homeostasis, but they may interact with different partners during development. This Zea mays (Maize) protein is Leucine-rich repeat receptor-like kinase protein THICK TASSEL DWARF1 (TD1).